The chain runs to 87 residues: Conotoxin Cl12.3 (87 aa).

The first 19 residues, 1-19, serve as a signal peptide directing secretion; sequence MKLTCVLVVLLLFLPYGDL. A propeptide spanning residues 20-42 is cleaved from the precursor; the sequence is ITNNYIGGAARKVTPWRRNLKTR.

This sequence belongs to the conotoxin O1 superfamily. In terms of processing, contains 4 disulfide bonds. Expressed by the venom duct.

Its subcellular location is the secreted. This chain is Conotoxin Cl12.3, found in Californiconus californicus (California cone).